The primary structure comprises 503 residues: Protein-cysteine N-palmitoyltransferase HHAT-like protein (503 aa).

Transmembrane regions (helical) follow at residues Leu-12–Leu-31, Trp-65–Ala-87, Trp-100–Leu-122, Met-127–Leu-149, Ala-250–Ile-272, Leu-287–Val-309, Val-426–Ser-445, and Ile-460–Val-482.

Belongs to the membrane-bound acyltransferase family. HHAT subfamily. In terms of assembly, interacts with SHH.

The protein resides in the endoplasmic reticulum membrane. Its function is as follows. Negatively regulates N-terminal palmitoylation of SHH by HHAT/SKN. This Mus musculus (Mouse) protein is Protein-cysteine N-palmitoyltransferase HHAT-like protein (Hhatl).